Consider the following 303-residue polypeptide: Aspartate carbamoyltransferase catalytic subunit (303 aa).

Residues R51 and T52 each coordinate carbamoyl phosphate. K80 lines the L-aspartate pocket. Carbamoyl phosphate contacts are provided by R101, H129, and Q132. L-aspartate is bound by residues R162 and R221. Residues L260 and P261 each coordinate carbamoyl phosphate.

The protein belongs to the aspartate/ornithine carbamoyltransferase superfamily. ATCase family. As to quaternary structure, heterooligomer of catalytic and regulatory chains.

It catalyses the reaction carbamoyl phosphate + L-aspartate = N-carbamoyl-L-aspartate + phosphate + H(+). It functions in the pathway pyrimidine metabolism; UMP biosynthesis via de novo pathway; (S)-dihydroorotate from bicarbonate: step 2/3. Its function is as follows. Catalyzes the condensation of carbamoyl phosphate and aspartate to form carbamoyl aspartate and inorganic phosphate, the committed step in the de novo pyrimidine nucleotide biosynthesis pathway. The sequence is that of Aspartate carbamoyltransferase catalytic subunit from Saccharolobus islandicus (strain M.16.4 / Kamchatka #3) (Sulfolobus islandicus).